The following is a 214-amino-acid chain: Leucyl/phenylalanyl-tRNA--protein transferase (214 aa).

The tract at residues 194-214 is disordered; that stretch reads FAPPGYSPDPASVVQRSSQTS.

It belongs to the L/F-transferase family.

The protein resides in the cytoplasm. The enzyme catalyses N-terminal L-lysyl-[protein] + L-leucyl-tRNA(Leu) = N-terminal L-leucyl-L-lysyl-[protein] + tRNA(Leu) + H(+). The catalysed reaction is N-terminal L-arginyl-[protein] + L-leucyl-tRNA(Leu) = N-terminal L-leucyl-L-arginyl-[protein] + tRNA(Leu) + H(+). It carries out the reaction L-phenylalanyl-tRNA(Phe) + an N-terminal L-alpha-aminoacyl-[protein] = an N-terminal L-phenylalanyl-L-alpha-aminoacyl-[protein] + tRNA(Phe). Functionally, functions in the N-end rule pathway of protein degradation where it conjugates Leu, Phe and, less efficiently, Met from aminoacyl-tRNAs to the N-termini of proteins containing an N-terminal arginine or lysine. The polypeptide is Leucyl/phenylalanyl-tRNA--protein transferase (Cereibacter sphaeroides (strain ATCC 17025 / ATH 2.4.3) (Rhodobacter sphaeroides)).